A 166-amino-acid polypeptide reads, in one-letter code: uncharacterized protein (166 aa).

Gly residues-rich tracts occupy residues 1-10 (MNYGNNGGGQ) and 76-86 (YRGGGGGGGGN). Residues 1 to 117 (MNYGNNGGGQ…GGGNKNFGPI (117 aa)) form a disordered region.

This is an uncharacterized protein from Caenorhabditis elegans.